The primary structure comprises 122 residues: Large ribosomal subunit protein uL14c (122 aa).

Belongs to the universal ribosomal protein uL14 family. As to quaternary structure, part of the 50S ribosomal subunit.

The protein resides in the plastid. It localises to the chloroplast. Binds to 23S rRNA. This chain is Large ribosomal subunit protein uL14c, found in Nicotiana sylvestris (Wood tobacco).